The primary structure comprises 453 residues: Homogentisate 1,2-dioxygenase (453 aa).

The interval 1 to 42 (MLEKAEKQRRAGSGQQRAAGYMPGFGNDFETESLPGALPQGQ) is disordered. Histidine 306 acts as the Proton acceptor in catalysis. The Fe cation site is built by histidine 349 and glutamate 355. Positions 364 and 385 each coordinate homogentisate. Histidine 385 contacts Fe cation.

Belongs to the homogentisate dioxygenase family. As to quaternary structure, hexamer; dimer of trimers. It depends on Fe cation as a cofactor.

It catalyses the reaction homogentisate + O2 = 4-maleylacetoacetate + H(+). The protein operates within amino-acid degradation; L-phenylalanine degradation; acetoacetate and fumarate from L-phenylalanine: step 4/6. Involved in the catabolism of homogentisate (2,5-dihydroxyphenylacetate or 2,5-OH-PhAc), a central intermediate in the degradation of phenylalanine and tyrosine. Catalyzes the oxidative ring cleavage of the aromatic ring of homogentisate to yield maleylacetoacetate. This Rhizobium meliloti (strain 1021) (Ensifer meliloti) protein is Homogentisate 1,2-dioxygenase.